Here is a 381-residue protein sequence, read N- to C-terminus: Subtilisin NAT (381 aa).

The first 29 residues, 1–29 (MRSKKLWISLLFALTLIFTMAFSNMSAQA), serve as a signal peptide directing secretion. Positions 30-106 (AGKSSTEKKY…VEEDHIAHEY (77 aa)) are excised as a propeptide. The region spanning 38–103 (KYIVGFKQTM…VAYVEEDHIA (66 aa)) is the Inhibitor I9 domain. In terms of domain architecture, Peptidase S8 spans 111-380 (PYGISQIKAP…KGLINVQAAA (270 aa)). Catalysis depends on aspartate 138, which acts as the Charge relay system. Aspartate 147 lines the Ca(2+) pocket. Catalysis depends on histidine 170, which acts as the Charge relay system. Ca(2+)-binding residues include leucine 181, asparagine 183, isoleucine 185, valine 187, alanine 275, tyrosine 277, threonine 280, and aspartate 303. Serine 327 functions as the Charge relay system in the catalytic mechanism.

It belongs to the peptidase S8 family. Monomer. Ca(2+) is required as a cofactor.

The protein localises to the secreted. The enzyme catalyses Hydrolysis of proteins with broad specificity for peptide bonds, and a preference for a large uncharged residue in P1. Hydrolyzes peptide amides.. With respect to regulation, inhibited by PMSF (phenylmethylsulfonyl fluoride). Functionally, subtilisin is an extracellular alkaline serine protease, it catalyzes the hydrolysis of proteins and peptide amides. Subtilisin NAT also has fibrinolytic activity. This is Subtilisin NAT from Bacillus subtilis subsp. natto.